Reading from the N-terminus, the 1545-residue chain is Dual oxidase 2 (1545 aa).

Residues 1–25 (MLCIRPEALVLLGALLTVPLDPVGG) form the signal peptide. The Extracellular segment spans residues 26–601 (QDALSLTWEV…EGSGPGFGIT (576 aa)). The interval 30–596 (SLTWEVQRYD…VIQYFEGSGP (567 aa)) is peroxidase-like; mediates peroxidase activity. Asn-100, Asn-312, Asn-348, Asn-358, Asn-455, and Asn-549 each carry an N-linked (GlcNAc...) asparagine glycan. Cysteines 124 and 1159 form a disulfide. The chain crosses the membrane as a helical span at residues 602 to 622 (IVALCCLPLMSLLISGVVAYF). Over 623 to 1037 (RSRERKKLQK…YKRFVENYRR (415 aa)) the chain is Cytoplasmic. EF-hand domains follow at residues 819–854 (PQDM…FMKG), 855–890 (SPED…FIEI), and 899–934 (QLTE…HDSE). Ca(2+)-binding residues include Asp-832, Asp-834, Asn-836, Tyr-838, Glu-843, Asp-868, Asp-870, Asn-872, and Glu-879. The interaction with TXNDC11 stretch occupies residues 960-1242 (RVSFIIRTPE…GSFALIQLPR (283 aa)). A helical membrane pass occupies residues 1038 to 1058 (HIVCVAIFSAICAGLFVERAY). Topologically, residues 1059–1074 (YYAFVSPPSGIAETTF) are extracellular. A helical transmembrane segment spans residues 1075–1097 (VGIILSRGTAASVSFMFSYILLT). Residues 1081 to 1263 (RGTAASVSFM…YVGDKLVSLS (183 aa)) form the Ferric oxidoreductase domain. At 1098–1125 (MCRNLITFLRETFLNHYVPFDAAVDFHR) the chain is on the cytoplasmic side. The helical transmembrane segment at 1126–1148 (WIAMAALVLAILHSVGHVVNVYI) threads the bilayer. Over 1149-1182 (FSVSPLSLLACVFPSVFVNDGSKLPQKFYWWFFQ) the chain is Extracellular. Residues 1183-1203 (TIPGMTGVLLLVVLAIMYVFA) form a helical membrane-spanning segment. The Cytoplasmic segment spans residues 1204 to 1220 (SPYFRRRSFRGFWLTHH). A helical transmembrane segment spans residues 1221 to 1241 (FYILLYVLLIIHGSFALIQLP). Position 1242 (Arg-1242) is a topological domain, extracellular. The chain crosses the membrane as a helical span at residues 1243 to 1263 (FHIFFLVPALIYVGDKLVSLS). An FAD-binding FR-type domain is found at 1264–1370 (RKKVEISVVK…DGPFGEGHQE (107 aa)). Topologically, residues 1264 to 1545 (RKKVEISVVK…THFVHHYENF (282 aa)) are cytoplasmic.

The protein in the N-terminal section; belongs to the peroxidase family. As to quaternary structure, heterodimer with DUOXA2; disulfide-linked. Interacts with TXNDC11, TPO and CYBA. N-glycosylated. As to expression, expressed in thyroid, and the digestive tract especially in stomach, cecum and sigmoidal colon (at protein level). Expressed in thyroid.

It is found in the apical cell membrane. Its subcellular location is the cell junction. The catalysed reaction is NADH + O2 + H(+) = H2O2 + NAD(+). It carries out the reaction NADPH + O2 + H(+) = H2O2 + NADP(+). It functions in the pathway hormone biosynthesis; thyroid hormone biosynthesis. The NADPH oxidase activity is calcium-dependent. Peroxidase activity is inhibited by aminobenzohydrazide. Generates hydrogen peroxide which is required for the activity of thyroid peroxidase/TPO and lactoperoxidase/LPO. Plays a role in thyroid hormones synthesis and lactoperoxidase-mediated antimicrobial defense at the surface of mucosa. May have its own peroxidase activity through its N-terminal peroxidase-like domain. In Sus scrofa (Pig), this protein is Dual oxidase 2 (DUOX2).